The chain runs to 253 residues: Large ribosomal subunit protein uL2C (253 aa).

It belongs to the universal ribosomal protein uL2 family. As to quaternary structure, component of the large ribosomal subunit (LSU). Mature yeast ribosomes consist of a small (40S) and a large (60S) subunit. The 40S small subunit contains 1 molecule of ribosomal RNA (18S rRNA) and at least 33 different proteins. The large 60S subunit contains 3 rRNA molecules (25S, 5.8S and 5S rRNA) and at least 46 different proteins.

Its subcellular location is the cytoplasm. The protein resides in the nucleus. Its function is as follows. Component of the ribosome, a large ribonucleoprotein complex responsible for the synthesis of proteins in the cell. The small ribosomal subunit (SSU) binds messenger RNAs (mRNAs) and translates the encoded message by selecting cognate aminoacyl-transfer RNA (tRNA) molecules. The large subunit (LSU) contains the ribosomal catalytic site termed the peptidyl transferase center (PTC), which catalyzes the formation of peptide bonds, thereby polymerizing the amino acids delivered by tRNAs into a polypeptide chain. The nascent polypeptides leave the ribosome through a tunnel in the LSU and interact with protein factors that function in enzymatic processing, targeting, and the membrane insertion of nascent chains at the exit of the ribosomal tunnel. In Schizosaccharomyces pombe (strain 972 / ATCC 24843) (Fission yeast), this protein is Large ribosomal subunit protein uL2C (rpl803).